A 227-amino-acid polypeptide reads, in one-letter code: Ribose-5-phosphate isomerase A (227 aa).

Substrate is bound by residues 26–29 (TGST), 82–85 (DGAD), and 95–98 (KGGG). Glu104 serves as the catalytic Proton acceptor. Lys122 is a substrate binding site.

This sequence belongs to the ribose 5-phosphate isomerase family. Homodimer.

It catalyses the reaction aldehydo-D-ribose 5-phosphate = D-ribulose 5-phosphate. It functions in the pathway carbohydrate degradation; pentose phosphate pathway; D-ribose 5-phosphate from D-ribulose 5-phosphate (non-oxidative stage): step 1/1. In terms of biological role, catalyzes the reversible conversion of ribose-5-phosphate to ribulose 5-phosphate. This is Ribose-5-phosphate isomerase A from Streptococcus pneumoniae (strain Hungary19A-6).